Consider the following 392-residue polypeptide: S-adenosylmethionine decarboxylase proenzyme (392 aa).

Active-site residues include glutamate 43 and glutamate 46. The active-site Schiff-base intermediate with substrate; via pyruvic acid is the serine 100. Serine 100 bears the Pyruvic acid (Ser); by autocatalysis mark. Cysteine 114 serves as the catalytic Proton donor; for catalytic activity. Residues serine 264 and histidine 277 each act as proton acceptor; for processing activity in the active site.

It belongs to the eukaryotic AdoMetDC family. The cofactor is pyruvate. Is synthesized initially as an inactive proenzyme. Formation of the active enzyme involves a self-maturation process in which the active site pyruvoyl group is generated from an internal serine residue via an autocatalytic post-translational modification. Two non-identical subunits are generated from the proenzyme in this reaction, and the pyruvate is formed at the N-terminus of the alpha chain, which is derived from the carboxyl end of the proenzyme. The post-translation cleavage follows an unusual pathway, termed non-hydrolytic serinolysis, in which the side chain hydroxyl group of the serine supplies its oxygen atom to form the C-terminus of the beta chain, while the remainder of the serine residue undergoes an oxidative deamination to produce ammonia and the pyruvoyl group blocking the N-terminus of the alpha chain.

The enzyme catalyses S-adenosyl-L-methionine + H(+) = S-adenosyl 3-(methylsulfanyl)propylamine + CO2. It functions in the pathway amine and polyamine biosynthesis; S-adenosylmethioninamine biosynthesis; S-adenosylmethioninamine from S-adenosyl-L-methionine: step 1/1. The chain is S-adenosylmethionine decarboxylase proenzyme from Leishmania infantum.